Reading from the N-terminus, the 835-residue chain is Protein VP3 (835 aa).

The segment at 171 to 245 (RKIKERMTTS…KHTIKLKQEK (75 aa)) is N7-methyltransferase activity. The interval 246 to 428 (WLGKRVSQFD…ITIKRFIPKG (183 aa)) is 2'-O-methyltransferase activity. The segment at 429–555 (VFYAFINNIT…NHLFIINGTD (127 aa)) is N7-methyltransferase activity. The tract at residues 556 to 692 (KYYKLDQYAN…GYINKVYSIT (137 aa)) is GTase/RTPase activity. The interval 693–835 (YADDPNYFIG…RGETVFDMSE (143 aa)) is 2'-5'-phosphodiesterase activity. Active-site for 2'-5'-phosphodiesterase activity residues include His718, Thr720, His797, and Thr799.

Belongs to the rotavirus VP3 family. In terms of assembly, interacts with VP1. Interacts with VP2.

It is found in the virion. It catalyses the reaction a 5'-end diphospho-ribonucleoside in mRNA + GTP + H(+) = a 5'-end (5'-triphosphoguanosine)-ribonucleoside in mRNA + diphosphate. It carries out the reaction a 5'-end (5'-triphosphoguanosine)-ribonucleoside in mRNA + S-adenosyl-L-methionine = a 5'-end (N(7)-methyl 5'-triphosphoguanosine)-ribonucleoside in mRNA + S-adenosyl-L-homocysteine. The enzyme catalyses 5'-triphosphoadenylyl-(2'-&gt;5')-adenylyl-(2'-&gt;5')-adenosine + 2 H2O = 2 AMP + ATP + 2 H(+). Functionally, multifunctional enzyme involved in mRNA capping. Catalyzes the formation of the 5' cap structure on the viral plus-strand transcripts. Specifically binds to GTP and displays guanylyltransferase and methyltransferase activities. Has affinity for ssRNA but not for dsRNA. Capping activity is non-specific and caps RNAs that initiate with either a G or an A residue. Together with VP1 polymerase, forms a VP1-VP3 complex positioned near the channels situated at each of the five-fold vertices of the core. Following infection, the outermost layer of the virus is lost, leaving a double-layered particle (DLP) made up of the core and VP6 shell. VP1 then catalyzes the transcription of fully conservative plus-strand genomic RNAs that are capped by VP3 and extruded through the DLP's channels into the cytoplasm where they function as mRNAs for translation of viral proteins. DLPs probably have an RNA triphosphatase activity as well, whereas open cores do not. Its function is as follows. Counteracts the host innate immune response thanks to its phosphodiesterase that degrades the 5'-triphosphorylated, 2'-5' linked adenylate oligomers produced by the host cell IFN-inducible 2',5'-oligoadenylate synthetase (OAS). The host RNaseL is therefore not activated. The sequence is that of Protein VP3 from Rotavirus A (strain RVA/Human/Japan/KU/1995/G1P1A[8]) (RV-A).